A 188-amino-acid polypeptide reads, in one-letter code: Pyridoxal 5'-phosphate synthase subunit PdxT (188 aa).

Residue 46–48 (GES) coordinates L-glutamine. The active-site Nucleophile is the Cys78. L-glutamine is bound by residues Arg105 and 134–135 (IR). Catalysis depends on charge relay system residues His170 and Glu172.

This sequence belongs to the glutaminase PdxT/SNO family. As to quaternary structure, in the presence of PdxS, forms a dodecamer of heterodimers. Only shows activity in the heterodimer.

It carries out the reaction aldehydo-D-ribose 5-phosphate + D-glyceraldehyde 3-phosphate + L-glutamine = pyridoxal 5'-phosphate + L-glutamate + phosphate + 3 H2O + H(+). The catalysed reaction is L-glutamine + H2O = L-glutamate + NH4(+). It participates in cofactor biosynthesis; pyridoxal 5'-phosphate biosynthesis. In terms of biological role, catalyzes the hydrolysis of glutamine to glutamate and ammonia as part of the biosynthesis of pyridoxal 5'-phosphate. The resulting ammonia molecule is channeled to the active site of PdxS. The chain is Pyridoxal 5'-phosphate synthase subunit PdxT from Desulforamulus reducens (strain ATCC BAA-1160 / DSM 100696 / MI-1) (Desulfotomaculum reducens).